A 212-amino-acid polypeptide reads, in one-letter code: Probable nicotinate-nucleotide adenylyltransferase (212 aa).

Belongs to the NadD family.

The enzyme catalyses nicotinate beta-D-ribonucleotide + ATP + H(+) = deamido-NAD(+) + diphosphate. It participates in cofactor biosynthesis; NAD(+) biosynthesis; deamido-NAD(+) from nicotinate D-ribonucleotide: step 1/1. Catalyzes the reversible adenylation of nicotinate mononucleotide (NaMN) to nicotinic acid adenine dinucleotide (NaAD). This Shewanella sp. (strain MR-7) protein is Probable nicotinate-nucleotide adenylyltransferase.